A 557-amino-acid chain; its full sequence is Protein Red (557 aa).

A disordered region spans residues 1 to 84; the sequence is MPERDSEPFS…RKKKSYYAKL (84 aa). The span at 16 to 25 shows a compositional bias: basic and acidic residues; sequence DGHDVDDPHS. A compositionally biased stretch (low complexity) spans 42–53; the sequence is TPRAAPTSAPPS. N6-acetyllysine occurs at positions 98 and 137. Lys-151 is covalently cross-linked (Glycyl lysine isopeptide (Lys-Gly) (interchain with G-Cter in SUMO2)). The interval 181 to 205 is disordered; the sequence is KEKEEEELMEKPQKETKKDEDPENK. The residue at position 287 (Ser-287) is a Phosphoserine. A compositionally biased stretch (basic residues) spans 294–303; sequence RNKKLKKKDK. A disordered region spans residues 294–402; sequence RNKKLKKKDK…PIDVDKGPGS (109 aa). The span at 304 to 313 shows a compositional bias: basic and acidic residues; the sequence is GKLEEKKPPE. Residues Lys-310 and Lys-331 each participate in a glycyl lysine isopeptide (Lys-Gly) (interchain with G-Cter in SUMO2) cross-link. Residues 332–398 show a composition bias toward basic and acidic residues; sequence TPRDKERERY…VDDEPIDVDK (67 aa). A run of 17 repeats spans residues 342–343, 344–345, 346–347, 348–349, 350–351, 352–353, 354–355, 356–357, 358–359, 360–361, 362–363, 364–365, 366–367, 368–369, 370–371, 372–373, and 374–375. Residues 342–375 form a 17 X 2 AA tandem repeats of R-[ED] region; the sequence is RERERDRERDRDRDRERERERDRERERERDRERE. Residues Lys-386, Lys-388, Lys-404, and Lys-408 each participate in a glycyl lysine isopeptide (Lys-Gly) (interchain with G-Cter in SUMO2) cross-link. Residues Ser-417 and Ser-460 each carry the phosphoserine modification. At Thr-485 the chain carries Phosphothreonine. Glycyl lysine isopeptide (Lys-Gly) (interchain with G-Cter in SUMO2) cross-links involve residues Lys-496, Lys-501, and Lys-509. Phosphoserine is present on Ser-536. Residues Lys-541, Lys-543, Lys-544, and Lys-553 each participate in a glycyl lysine isopeptide (Lys-Gly) (interchain with G-Cter in SUMO2) cross-link.

Belongs to the RED family. In terms of assembly, component of the spliceosome B complex. Interacts with SMU1. Interacts with MAD1L1. May interact with DHX15.

The protein localises to the nucleus. It is found in the nucleoplasm. The protein resides in the chromosome. It localises to the cytoplasm. Its subcellular location is the cytoskeleton. The protein localises to the spindle pole. Involved in pre-mRNA splicing as a component of the spliceosome. Auxiliary spliceosomal protein that regulates selection of alternative splice sites in a small set of target pre-mRNA species. Required for normal mitotic cell cycle progression. Recruits MAD1L1 and MAD2L1 to kinetochores, and is required to trigger the spindle assembly checkpoint. Required for normal accumulation of SMU1. The sequence is that of Protein Red (IK) from Pongo abelii (Sumatran orangutan).